Consider the following 334-residue polypeptide: Phosphoribosylformylglycinamidine cyclo-ligase (334 aa).

Belongs to the AIR synthase family.

The protein resides in the cytoplasm. It catalyses the reaction 2-formamido-N(1)-(5-O-phospho-beta-D-ribosyl)acetamidine + ATP = 5-amino-1-(5-phospho-beta-D-ribosyl)imidazole + ADP + phosphate + H(+). Its pathway is purine metabolism; IMP biosynthesis via de novo pathway; 5-amino-1-(5-phospho-D-ribosyl)imidazole from N(2)-formyl-N(1)-(5-phospho-D-ribosyl)glycinamide: step 2/2. This Pyrococcus furiosus (strain ATCC 43587 / DSM 3638 / JCM 8422 / Vc1) protein is Phosphoribosylformylglycinamidine cyclo-ligase.